The chain runs to 101 residues: Thiosulfate sulfurtransferase GlpE (101 aa).

In terms of domain architecture, Rhodanese spans 17 to 101 (EAKSVQIVDI…GFSAWHEANA (85 aa)). The active-site Cysteine persulfide intermediate is cysteine 65.

The protein belongs to the GlpE family.

It is found in the cytoplasm. The enzyme catalyses thiosulfate + hydrogen cyanide = thiocyanate + sulfite + 2 H(+). The catalysed reaction is thiosulfate + [thioredoxin]-dithiol = [thioredoxin]-disulfide + hydrogen sulfide + sulfite + 2 H(+). Transferase that catalyzes the transfer of sulfur from thiosulfate to thiophilic acceptors such as cyanide or dithiols. May function in a CysM-independent thiosulfate assimilation pathway by catalyzing the conversion of thiosulfate to sulfite, which can then be used for L-cysteine biosynthesis. The polypeptide is Thiosulfate sulfurtransferase GlpE (Shewanella oneidensis (strain ATCC 700550 / JCM 31522 / CIP 106686 / LMG 19005 / NCIMB 14063 / MR-1)).